Here is a 278-residue protein sequence, read N- to C-terminus: Thioredoxin-related transmembrane protein 1 (278 aa).

The signal sequence occupies residues 1-26; that stretch reads MAPSGSLRIPVAVLLLLLWGAPWAHG. Residues 27 to 132 enclose the Thioredoxin domain; sequence KRSDVRIITD…FINFISDKEW (106 aa). At 27–180 the chain is on the extracellular side; sequence KRSDVRIITD…EDLGLPIWGS (154 aa). Catalysis depends on nucleophile residues C56 and C59. C56 and C59 are joined by a disulfide. A helical membrane pass occupies residues 181–203; the sequence is YTVFALATLLSGLLLGLFMIFVA. Over 204-278 the chain is Cytoplasmic; it reads DCLCPSKRRR…VGPSLATDKS (75 aa). 2 S-palmitoyl cysteine lipidation sites follow: C205 and C207. Residues 213 to 278 form a disordered region; sequence RPQPYPSRKL…VGPSLATDKS (66 aa). Phosphoserine occurs at positions 226, 245, 268, 272, and 278. Over residues 235–250 the composition is skewed to acidic residues; sequence EEQEADVEDVSEEESE.

In terms of assembly, interacts with ATP2A2. Palmitoylated; palmitoylation is required for localization to mitochondria-associated endoplasmic reticulum membrane (MAM).

The protein resides in the endoplasmic reticulum membrane. It localises to the mitochondrion membrane. The protein localises to the secreted. It carries out the reaction Catalyzes the rearrangement of -S-S- bonds in proteins.. In terms of biological role, thiredoxin domain-containing protein that participates in various redox reactions through the reversible oxidation of its active center dithiol to a disulfide and catalyze dithiol-disulfide exchange reactions. Acts as a key inhibitor of the alternative triglyceride biosynthesis pathway by inhibiting the activity of TMEM68/DIESL at the endoplasmic reticulum, thereby restricting accumulation of triacylglycerol. The alternative triglyceride biosynthesis pathway mediates formation of triacylglycerol from diacylglycerol and membrane phospholipids. Acts as a protein disulfide isomerase by catalyzing formation or reduction of disulfide bonds. Specifically mediates formation of disulfide bonds of transmembrane proteins at the endoplasmic reticulum membrane. Involved in endoplasmic reticulum-associated degradation (ERAD) via its protein disulfide isomerase activity by acting on folding-defective polypeptides at the endoplasmic reticulum membrane. Acts as a negative regulator of platelet aggregation following secretion in the extracellular space. Acts as a regulator of endoplasmic reticulum-mitochondria contact sites via its ability to regulate redox signals. Regulates endoplasmic reticulum-mitochondria Ca(2+) flux. In Bos taurus (Bovine), this protein is Thioredoxin-related transmembrane protein 1 (TMX1).